The following is a 23-amino-acid chain: Hemocyanin subunit 1 (23 aa).

The tract at residues 1 to 23 (DSPGGASDTQKQHXVNSXXXKXY) is disordered.

It belongs to the tyrosinase family. Hemocyanin subfamily. In terms of tissue distribution, hemolymph.

It localises to the secreted. It is found in the extracellular space. Its function is as follows. Hemocyanins are copper-containing oxygen carriers occurring freely dissolved in the hemolymph of many mollusks and arthropods. This chain is Hemocyanin subunit 1, found in Cancer pagurus (Rock crab).